We begin with the raw amino-acid sequence, 64 residues long: Small ribosomal subunit protein eS17 (64 aa).

The protein belongs to the eukaryotic ribosomal protein eS17 family.

The polypeptide is Small ribosomal subunit protein eS17 (Methanosarcina acetivorans (strain ATCC 35395 / DSM 2834 / JCM 12185 / C2A)).